The primary structure comprises 197 residues: MLQSSNSFARLLAELQKLPGVGEKTALRLAFHLLKYPENTAALAESLGEVLSRVKFCSVCFGITEEDPCRLCSSDRDETSLCVVEEPQDLLAVERTRAFRGRYHVLQGALSPLNGVTPDRLRIAELMRRLEEGTVREVVIATNFSVEGETTALYLARQIKPLGIRVTRLAHGIPLGSDLEYVDAATVQRALEGRSEL.

The C4-type zinc-finger motif lies at 57-72 (CSVCFGITEEDPCRLC). Positions 79–174 (TSLCVVEEPQ…RVTRLAHGIP (96 aa)) constitute a Toprim domain.

It belongs to the RecR family.

Functionally, may play a role in DNA repair. It seems to be involved in an RecBC-independent recombinational process of DNA repair. It may act with RecF and RecO. This chain is Recombination protein RecR, found in Geobacter metallireducens (strain ATCC 53774 / DSM 7210 / GS-15).